The sequence spans 291 residues: Elongation factor Ts (291 aa).

An involved in Mg(2+) ion dislocation from EF-Tu region spans residues 82–85; it reads TDFC.

This sequence belongs to the EF-Ts family.

It localises to the cytoplasm. Functionally, associates with the EF-Tu.GDP complex and induces the exchange of GDP to GTP. It remains bound to the aminoacyl-tRNA.EF-Tu.GTP complex up to the GTP hydrolysis stage on the ribosome. This chain is Elongation factor Ts, found in Methylobacillus flagellatus (strain ATCC 51484 / DSM 6875 / VKM B-1610 / KT).